A 504-amino-acid chain; its full sequence is Kinesin light chain 3 (504 aa).

Positions 90-150 (ALSAHVGALE…EEEKRHLEFL (61 aa)) form a coiled coil. The disordered stretch occupies residues 153-197 (LRQYDPPAESQQSESPPRRDSLASLFPSEEEERKGPEAAGAAAAQ). The segment covering 158 to 167 (PPAESQQSES) has biased composition (low complexity). S173 carries the phosphoserine modification. TPR repeat units lie at residues 207-240 (LRTLHNLVIQYAGQGRYEVAVPLCRQALEDLERS), 249-282 (ATMLNILALVYRDQNKYKEATDLLHDALQIREQT), 291-324 (AATLNNLAVLYGKRGRYREAEPLCQRALEIREKV), 333-366 (AKQLNNLALLCQNQGKFEDVERHYARALSIYEAL), and 375-408 (AKTKNNLASAYLKQNKYQQAEELYKEILHKEDLP). Residues 411 to 438 (LGAPNTGTAGDAEQALRRSSSLSKIRES) are disordered. S466 bears the Phosphoserine mark. Phosphothreonine is present on T498. Residue S502 is modified to Phosphoserine.

This sequence belongs to the kinesin light chain family. Oligomer composed of two heavy chains and two light chains. Associates with microtubulin in an ATP-dependent manner. Interacts with KIF5C. Interacts with ODF1. Interacts with LRGUK. Interacts with VDAC2.

It is found in the cytoplasm. The protein localises to the cytoskeleton. Its subcellular location is the mitochondrion. In terms of biological role, kinesin is a microtubule-associated force-producing protein that may play a role in organelle transport. Plays a role during spermiogenesis in the development of the sperm tail midpiece and in the normal function of spermatozoa. May play a role in the formation of the mitochondrial sheath formation in the developing spermatid midpiece. The chain is Kinesin light chain 3 (KLC3) from Pongo abelii (Sumatran orangutan).